A 177-amino-acid polypeptide reads, in one-letter code: Small ribosomal subunit protein uS5 (177 aa).

The region spanning 21 to 84 (LKEKMISVNR…DEARRGMIKI (64 aa)) is the S5 DRBM domain.

This sequence belongs to the universal ribosomal protein uS5 family. In terms of assembly, part of the 30S ribosomal subunit. Contacts proteins S4 and S8.

With S4 and S12 plays an important role in translational accuracy. Functionally, located at the back of the 30S subunit body where it stabilizes the conformation of the head with respect to the body. In Nitrosomonas eutropha (strain DSM 101675 / C91 / Nm57), this protein is Small ribosomal subunit protein uS5.